Here is a 331-residue protein sequence, read N- to C-terminus: N-arachidonyl glycine receptor (331 aa).

The Extracellular segment spans residues 1–26; sequence MITLNNQDQPVPFNSSHPDEYKIAAL. Asn14 carries N-linked (GlcNAc...) asparagine glycosylation. A helical transmembrane segment spans residues 27-47; it reads VFYSCIFIIGLFVNITALWVF. Residues 48–56 are Cytoplasmic-facing; sequence SCTTKKRTT. The helical transmembrane segment at 57–77 threads the bilayer; sequence VTIYMMNVALVDLIFIMTLPF. Residues 78 to 95 are Extracellular-facing; the sequence is RMFYYAKDEWPFGEYFCQ. The cysteines at positions 94 and 172 are disulfide-linked. The helical transmembrane segment at 96-116 threads the bilayer; it reads ILGALTVFYPSIALWLLAFIS. Residues 117 to 138 lie on the Cytoplasmic side of the membrane; sequence ADRYMAIVQPKYAKELKNTCKA. The helical transmembrane segment at 139-159 threads the bilayer; the sequence is VLACVGVWIMTLTTTTPLLLL. The Extracellular portion of the chain corresponds to 160-191; it reads YKDPDKDSTPATCLKISDIIYLKAVNVLNLTR. Residues 192–212 form a helical membrane-spanning segment; sequence LTFFFLIPLFIMIGCYLVIIH. Residues 213–232 lie on the Cytoplasmic side of the membrane; that stretch reads NLLHGRTSKLKPKVKEKSIR. A helical membrane pass occupies residues 233–253; the sequence is IIITLLVQVLVCFMPFHICFA. Over 254–268 the chain is Extracellular; that stretch reads FLMLGTGENSYNPWG. The helical transmembrane segment at 269–289 threads the bilayer; sequence AFTTFLMNLSTCLDVILYYIV. The Cytoplasmic segment spans residues 290-331; the sequence is SKQFQARVISVMLYRNYLRSMRRKSFRSGSLRSLSNINSEML. At Ser322 the chain carries Phosphoserine.

The protein belongs to the G-protein coupled receptor 1 family. As to expression, expressed in midpiece of spermatozoon (at protein level). Most abundant in testis and spleen. Highly expressed in CD4 and CD8-positive T-cells as well as CD19-positive B-cells.

It localises to the cell membrane. The protein localises to the cytoplasmic vesicle membrane. Its function is as follows. G protein-coupled receptor (GPCR) that plays a role in diverse physiological processes particularly within the immune and nervous systems. Becomes active when triggered by various endogenous ligands including endocannabinoid N-arachidonyl glycine (NAGly), delta-9-tetrahydrocannabinol or resolvin D2/RvD2 derived from the omega-3 fatty acid docosahexaenoic acid (DHA). Upon RvD2 binding, facilitates the resolution of inflammation, aiding in tissue repair and homeostasis. Mechanistically, RvD2 ligation initiates Galphas protein coupling, activation of cAMP-PKA signaling pathway and phosphorylation of STAT3, leading to RvD2-stimulated macrophage phagocytosis. Mediates NAGly-induced process of reorganization of actin filaments and induction of acrosomal exocytosis. Activation by N-arachidonoyl glycine (NAGly) can also induce apoptosis in macrophages. Plays a role in homeostasis of CD8+ subsets of intraepithelial lymphocytes (IELs) (CD8alphaalpha and CD8alphabeta IELs) in small intestine by supporting preferential migration of CD8alphaalpha T-cells to intraepithelial compartment over lamina propria compartment, and by mediating their reconstitution into small intestine after bone marrow transplant. Also participates in hypotensive responses, mediating reduction in intraocular and blood pressure. The sequence is that of N-arachidonyl glycine receptor (GPR18) from Homo sapiens (Human).